The chain runs to 472 residues: tRNA-2-methylthio-N(6)-dimethylallyladenosine synthase (472 aa).

Positions 1 to 24 are disordered; it reads MTGTPDVFPPATPGGAPLVALPAG. Residues 33 to 150 enclose the MTTase N-terminal domain; it reads GKLYIKTHGC…LPELIRARRE (118 aa). Residues Cys-42, Cys-79, Cys-113, Cys-187, Cys-191, and Cys-194 each coordinate [4Fe-4S] cluster. The region spanning 173-407 is the Radical SAM core domain; that stretch reads RAEGASAFVS…RINAHAAGIS (235 aa). In terms of domain architecture, TRAM spans 408–471; it reads EKMVGTVQTV…TNSLRARVVA (64 aa).

Belongs to the methylthiotransferase family. MiaB subfamily. Monomer. Requires [4Fe-4S] cluster as cofactor.

Its subcellular location is the cytoplasm. It catalyses the reaction N(6)-dimethylallyladenosine(37) in tRNA + (sulfur carrier)-SH + AH2 + 2 S-adenosyl-L-methionine = 2-methylsulfanyl-N(6)-dimethylallyladenosine(37) in tRNA + (sulfur carrier)-H + 5'-deoxyadenosine + L-methionine + A + S-adenosyl-L-homocysteine + 2 H(+). Catalyzes the methylthiolation of N6-(dimethylallyl)adenosine (i(6)A), leading to the formation of 2-methylthio-N6-(dimethylallyl)adenosine (ms(2)i(6)A) at position 37 in tRNAs that read codons beginning with uridine. The sequence is that of tRNA-2-methylthio-N(6)-dimethylallyladenosine synthase from Stenotrophomonas maltophilia (strain K279a).